A 171-amino-acid polypeptide reads, in one-letter code: Glycine cleavage system H protein 4 (171 aa).

The region spanning Phe30–Glu112 is the Lipoyl-binding domain. Residue Lys71 is modified to N6-lipoyllysine. The tract at residues Glu139–Lys171 is disordered.

The protein belongs to the GcvH family. As to quaternary structure, the glycine cleavage system is composed of four proteins: P, T, L and H. It depends on (R)-lipoate as a cofactor.

In terms of biological role, the glycine cleavage system catalyzes the degradation of glycine. The H protein shuttles the methylamine group of glycine from the P protein to the T protein. This chain is Glycine cleavage system H protein 4, found in Aquifex aeolicus (strain VF5).